The following is a 112-amino-acid chain: Large ribosomal subunit protein uL1 (112 aa).

It belongs to the universal ribosomal protein uL1 family.

The sequence is that of Large ribosomal subunit protein uL1 (rpl-10a) from Caenorhabditis remanei (Caenorhabditis vulgaris).